The primary structure comprises 361 residues: Phospho-N-acetylmuramoyl-pentapeptide-transferase (361 aa).

The next 10 membrane-spanning stretches (helical) occupy residues I27–W47, G70–W90, S97–Y117, Y134–L154, T167–S187, G199–S219, T236–Y256, V263–V283, L288–V308, and K338–L358.

It belongs to the glycosyltransferase 4 family. MraY subfamily. Mg(2+) is required as a cofactor.

It localises to the cell inner membrane. It carries out the reaction UDP-N-acetyl-alpha-D-muramoyl-L-alanyl-gamma-D-glutamyl-meso-2,6-diaminopimeloyl-D-alanyl-D-alanine + di-trans,octa-cis-undecaprenyl phosphate = di-trans,octa-cis-undecaprenyl diphospho-N-acetyl-alpha-D-muramoyl-L-alanyl-D-glutamyl-meso-2,6-diaminopimeloyl-D-alanyl-D-alanine + UMP. It functions in the pathway cell wall biogenesis; peptidoglycan biosynthesis. Functionally, catalyzes the initial step of the lipid cycle reactions in the biosynthesis of the cell wall peptidoglycan: transfers peptidoglycan precursor phospho-MurNAc-pentapeptide from UDP-MurNAc-pentapeptide onto the lipid carrier undecaprenyl phosphate, yielding undecaprenyl-pyrophosphoryl-MurNAc-pentapeptide, known as lipid I. The chain is Phospho-N-acetylmuramoyl-pentapeptide-transferase from Legionella pneumophila (strain Paris).